The following is an 88-amino-acid chain: Small ribosomal subunit protein bS20 (88 aa).

Residues 1–27 (MANTPQAKKRARQNEKARKHNASMRSM) form a disordered region. Residues 7-22 (AKKRARQNEKARKHNA) are compositionally biased toward basic residues.

The protein belongs to the bacterial ribosomal protein bS20 family.

Its function is as follows. Binds directly to 16S ribosomal RNA. This is Small ribosomal subunit protein bS20 from Cellvibrio japonicus (strain Ueda107) (Pseudomonas fluorescens subsp. cellulosa).